Reading from the N-terminus, the 271-residue chain is MIVVSVEASYRRVARTALREGTPATGERAVPEEVPVAFSYGGSTHAVMMASPADLIDFAVGFSLTEGIISMRSEIQAIEVVEAGQGYDVQVDLTDAEADALRARRRHMAGPVGCGLCGIESIEQAVRVVPDLSSVKSSVHGNDIVAAVKALNDAQTLNRETRAVHGAGFYNPREGLLAVREDVGRHNALDKLAGAVVNAGISAQMGIVAVTSRLSVEMVQKTAILGCPVLAAISAPTALAIETADRAGITLVALVRGEDFEIFTRADRIIL.

The active-site Cysteine persulfide intermediate is cysteine 114.

Belongs to the FdhD family.

It is found in the cytoplasm. Functionally, required for formate dehydrogenase (FDH) activity. Acts as a sulfur carrier protein that transfers sulfur from IscS to the molybdenum cofactor prior to its insertion into FDH. The polypeptide is Sulfur carrier protein FdhD (Agrobacterium fabrum (strain C58 / ATCC 33970) (Agrobacterium tumefaciens (strain C58))).